The following is an 83-amino-acid chain: RNA-binding protein Hfq (83 aa).

The Sm domain maps to 10-70 (DTFLNQVRKE…ISTVMPLRPI (61 aa)).

The protein belongs to the Hfq family. As to quaternary structure, homohexamer.

Functionally, RNA chaperone that binds small regulatory RNA (sRNAs) and mRNAs to facilitate mRNA translational regulation in response to envelope stress, environmental stress and changes in metabolite concentrations. Also binds with high specificity to tRNAs. The protein is RNA-binding protein Hfq of Desulfitobacterium hafniense (strain Y51).